Reading from the N-terminus, the 334-residue chain is Protein-methionine-sulfoxide reductase catalytic subunit MsrP (334 aa).

Residues 1–44 (MKKNQFLKESDVTAESVFFMKRRQVLKALGISAAALSLPHAAHA) constitute a signal peptide (tat-type signal). Mo-molybdopterin-binding positions include asparagine 88, 91–92 (YE), cysteine 146, threonine 181, asparagine 233, arginine 238, and 249–251 (GIK).

Belongs to the MsrP family. As to quaternary structure, heterodimer of a catalytic subunit (MsrP) and a heme-binding subunit (MsrQ). Mo-molybdopterin is required as a cofactor. Post-translationally, predicted to be exported by the Tat system. The position of the signal peptide cleavage has not been experimentally proven.

The protein localises to the periplasm. It catalyses the reaction L-methionyl-[protein] + a quinone + H2O = L-methionyl-(S)-S-oxide-[protein] + a quinol. The catalysed reaction is L-methionyl-[protein] + a quinone + H2O = L-methionyl-(R)-S-oxide-[protein] + a quinol. Part of the MsrPQ system that repairs oxidized periplasmic proteins containing methionine sulfoxide residues (Met-O), using respiratory chain electrons. Thus protects these proteins from oxidative-stress damage caused by reactive species of oxygen and chlorine generated by the host defense mechanisms. MsrPQ is essential for the maintenance of envelope integrity under bleach stress, rescuing a wide series of structurally unrelated periplasmic proteins from methionine oxidation, including the primary periplasmic chaperone SurA and the lipoprotein Pal. The catalytic subunit MsrP is non-stereospecific, being able to reduce both (R-) and (S-) diastereoisomers of methionine sulfoxide. The polypeptide is Protein-methionine-sulfoxide reductase catalytic subunit MsrP (Shigella boydii serotype 18 (strain CDC 3083-94 / BS512)).